A 192-amino-acid chain; its full sequence is Small ribosomal subunit protein bS16 (192 aa).

The interval 153 to 192 (AEAKAKAEAEAAAAAEEAAETEETPVEAAAEEAPAAESAE) is disordered. The span at 178 to 192 (VEAAAEEAPAAESAE) shows a compositional bias: low complexity.

Belongs to the bacterial ribosomal protein bS16 family.

The protein is Small ribosomal subunit protein bS16 of Porphyromonas gingivalis (strain ATCC BAA-308 / W83).